A 124-amino-acid polypeptide reads, in one-letter code: Quinol oxidase subunit 4 (124 aa).

3 consecutive transmembrane segments (helical) span residues 16-36 (IVGFILSIVLTLLALWVAVYT), 44-64 (LWIIFGFAFIQAALQLLMFMH), and 78-98 (TLFGFFGAIVIVLGSIWIFAA).

The protein belongs to the cytochrome c oxidase bacterial subunit 4 family.

The protein resides in the cell membrane. The enzyme catalyses 2 a quinol + O2 = 2 a quinone + 2 H2O. Catalyzes quinol oxidation with the concomitant reduction of oxygen to water. Major component for energy conversion during vegetative growth. The protein is Quinol oxidase subunit 4 (qoxD) of Bacillus subtilis (strain 168).